We begin with the raw amino-acid sequence, 67 residues long: Small ribosomal subunit protein eS27 (67 aa).

Zn(2+) is bound by residues cysteine 22, cysteine 25, cysteine 41, and cysteine 44. A C4-type zinc finger spans residues 22–44; it reads CPDCGNEQITFSHAAMVVRCLVC.

The protein belongs to the eukaryotic ribosomal protein eS27 family. As to quaternary structure, part of the 30S ribosomal subunit. It depends on Zn(2+) as a cofactor.

This chain is Small ribosomal subunit protein eS27, found in Pyrobaculum aerophilum (strain ATCC 51768 / DSM 7523 / JCM 9630 / CIP 104966 / NBRC 100827 / IM2).